The sequence spans 217 residues: U exon protein (217 aa).

Disordered stretches follow at residues 79 to 113 (ISGE…GGRV) and 171 to 217 (KEAP…WQRR). Residues 188 to 197 (RGQRGRKRRC) are compositionally biased toward basic residues. Residues 202-217 (GGFQQPTGANQAWQRR) show a composition bias toward polar residues.

It belongs to the adenoviridae U exon protein family.

Its subcellular location is the host nucleus. The protein localises to the host nucleoplasm. It is found in the host nucleolus. Might play a role in viral replication since it is associated with viral replication centers. Seems to have an effect on DBP localization. The protein is U exon protein of Human adenovirus C serotype 5 (HAdV-5).